Reading from the N-terminus, the 245-residue chain is Demethylmenaquinone methyltransferase (245 aa).

Residues Thr-69, Asp-90, and 118–119 (DC) each bind S-adenosyl-L-methionine.

The protein belongs to the class I-like SAM-binding methyltransferase superfamily. MenG/UbiE family.

The enzyme catalyses a 2-demethylmenaquinol + S-adenosyl-L-methionine = a menaquinol + S-adenosyl-L-homocysteine + H(+). The protein operates within quinol/quinone metabolism; menaquinone biosynthesis; menaquinol from 1,4-dihydroxy-2-naphthoate: step 2/2. Its function is as follows. Methyltransferase required for the conversion of demethylmenaquinol (DMKH2) to menaquinol (MKH2). The sequence is that of Demethylmenaquinone methyltransferase from Porphyromonas gingivalis (strain ATCC 33277 / DSM 20709 / CIP 103683 / JCM 12257 / NCTC 11834 / 2561).